We begin with the raw amino-acid sequence, 137 residues long: Ribosomal RNA large subunit methyltransferase H (137 aa).

S-adenosyl-L-methionine contacts are provided by residues Leu56, Gly85, and 104 to 109; that span reads LSPLTF.

It belongs to the RNA methyltransferase RlmH family. In terms of assembly, homodimer.

It localises to the cytoplasm. It carries out the reaction pseudouridine(1915) in 23S rRNA + S-adenosyl-L-methionine = N(3)-methylpseudouridine(1915) in 23S rRNA + S-adenosyl-L-homocysteine + H(+). Its function is as follows. Specifically methylates the pseudouridine at position 1915 (m3Psi1915) in 23S rRNA. The sequence is that of Ribosomal RNA large subunit methyltransferase H from Prochlorococcus marinus subsp. pastoris (strain CCMP1986 / NIES-2087 / MED4).